The sequence spans 437 residues: Sonic hedgehog protein (437 aa).

The first 24 residues, 1 to 24 (MLLLLARCFLVILASSLLVCPGLA), serve as a signal peptide directing secretion. Cys-25 carries N-palmitoyl cysteine lipidation. Residues 33–39 (KRRHPKK) carry the Cardin-Weintraub motif. 7 residues coordinate Ca(2+): Glu-90, Glu-91, Asp-96, Thr-126, Glu-127, Asp-130, and Asp-132. The Zn(2+) site is built by His-141, Asp-148, and His-183. Gly-198 carries Cholesterol glycine ester lipidation. Asn-279 carries N-linked (GlcNAc...) asparagine glycosylation.

It belongs to the hedgehog family. As to quaternary structure, interacts with HHATL/GUP1 which negatively regulates HHAT-mediated palmitoylation of the SHH N-terminus. Interacts with BOC and CDON. Interacts with HHIP. Interacts with DISP1 via its cholesterol anchor. Interacts with SCUBE2. Interacts with glypican GPC3. Multimer. Post-translationally, the C-terminal domain displays an autoproteolysis activity and a cholesterol transferase activity. Both activities result in the cleavage of the full-length protein and covalent attachment of a cholesterol moiety to the C-terminal of the newly generated N-terminal fragment (ShhN). Cholesterylation is required for the sonic hedgehog protein N-product targeting to lipid rafts and multimerization. ShhN is the active species in both local and long-range signaling, whereas the C-product (ShhC) is degraded in the endoplasmic reticulum. In terms of processing, N-palmitoylation by HHAT of ShhN is required for sonic hedgehog protein N-product multimerization and full activity. It is a prerequisite for the membrane-proximal positioning and the subsequent shedding of this N-terminal peptide. The lipidated N- and C-terminal peptides of ShhNp can be cleaved (shedding). The N-terminal palmitoylated peptide is cleaved at the Cardin-Weintraub (CW) motif site. The cleavage reduced the interactions with heparan sulfate. The cleavage is enhanced by SCUBE2. In terms of tissue distribution, expressed in a number of embryonic tissues including the notochord, ventral neural tube, floor plate, lung bud, zone of polarizing activity and posterior distal mesenchyme of limbs. In the adult, expressed in lung and neural retina.

It is found in the endoplasmic reticulum membrane. It localises to the golgi apparatus membrane. Its subcellular location is the cell membrane. The catalysed reaction is glycyl-L-cysteinyl-[protein] + cholesterol + H(+) = [protein]-C-terminal glycyl cholesterol ester + N-terminal L-cysteinyl-[protein]. Its function is as follows. The C-terminal part of the sonic hedgehog protein precursor displays an autoproteolysis and a cholesterol transferase activity. Both activities result in the cleavage of the full-length protein into two parts (ShhN and ShhC) followed by the covalent attachment of a cholesterol moiety to the C-terminal of the newly generated ShhN. Both activities occur in the reticulum endoplasmic. Once cleaved, ShhC is degraded in the endoplasmic reticulum. In terms of biological role, the dually lipidated sonic hedgehog protein N-product (ShhNp) is a morphogen which is essential for a variety of patterning events during development. Induces ventral cell fate in the neural tube and somites. Involved in the patterning of the anterior-posterior axis of the developing limb bud. Essential for axon guidance. Binds to the patched (PTCH1) receptor, which functions in association with smoothened (SMO), to activate the transcription of target genes. In the absence of SHH, PTCH1 represses the constitutive signaling activity of SMO. The protein is Sonic hedgehog protein of Mus musculus (Mouse).